We begin with the raw amino-acid sequence, 62 residues long: Large ribosomal subunit protein bL32 (62 aa).

Residues 1-20 (MAVPARHTSKQKKRSRRGHI) form a disordered region. The segment covering 7 to 20 (HTSKQKKRSRRGHI) has biased composition (basic residues).

Belongs to the bacterial ribosomal protein bL32 family.

The sequence is that of Large ribosomal subunit protein bL32 from Lactobacillus acidophilus (strain ATCC 700396 / NCK56 / N2 / NCFM).